A 256-amino-acid polypeptide reads, in one-letter code: Thiazole synthase (256 aa).

Residue Lys95 is the Schiff-base intermediate with DXP of the active site. 1-deoxy-D-xylulose 5-phosphate contacts are provided by residues Gly156, 182–183 (AG), and 204–205 (NT).

It belongs to the ThiG family. As to quaternary structure, homotetramer. Forms heterodimers with either ThiH or ThiS.

The protein localises to the cytoplasm. It catalyses the reaction [ThiS sulfur-carrier protein]-C-terminal-Gly-aminoethanethioate + 2-iminoacetate + 1-deoxy-D-xylulose 5-phosphate = [ThiS sulfur-carrier protein]-C-terminal Gly-Gly + 2-[(2R,5Z)-2-carboxy-4-methylthiazol-5(2H)-ylidene]ethyl phosphate + 2 H2O + H(+). It participates in cofactor biosynthesis; thiamine diphosphate biosynthesis. Catalyzes the rearrangement of 1-deoxy-D-xylulose 5-phosphate (DXP) to produce the thiazole phosphate moiety of thiamine. Sulfur is provided by the thiocarboxylate moiety of the carrier protein ThiS. In vitro, sulfur can be provided by H(2)S. The sequence is that of Thiazole synthase from Escherichia coli O7:K1 (strain IAI39 / ExPEC).